A 213-amino-acid chain; its full sequence is Response regulator GacA (213 aa).

The 117-residue stretch at 3-119 (RVLVVDDHDL…EMVQAIRLVF (117 aa)) folds into the Response regulatory domain. 4-aspartylphosphate is present on Asp-54. The HTH luxR-type domain maps to 142–207 (SDSPFDALSE…ELTLLAVRHG (66 aa)). The H-T-H motif DNA-binding region spans 166–185 (VQIISDKLCLSPKTVNTYRY).

Post-translationally, phosphorylated by GacS.

Member of the two-component regulatory system GacA/GacS which controls the expression of secondary metabolites and extracellular products. Acts (probably primarily) by activating expression of CsrA1 and CsrA2 antagonist small RNAs (sRNA) RsmX, RsmY and RsmZ which bind to and prevent translation repression by CsrA1 and CsrA2. Involved in the regulation of secondary metabolism and in the synthesis of the antifungal factors cyanide, 2,4-diacetylphloroglucinol and pyoluteorin. Involved in synthesis of the autoinducing signal (unrelated to N-acylhomoserine lactones, induces the Gac/Csr cascade). Exercises positive post-transcriptional control over the hcnABC and aprA genes; acts upstream of CsrA2 (rsmA). Controls expression of csrA1 (rsmE) and csrA2. The polypeptide is Response regulator GacA (Pseudomonas protegens (strain DSM 19095 / LMG 27888 / CFBP 6595 / CHA0)).